The chain runs to 480 residues: CASP8 and FADD-like apoptosis regulator (480 aa).

2 DED domains span residues 1 to 73 and 92 to 170; these read MSAE…RILK and DYRV…KIQK. The segment at 1–195 is interaction with CASP8; the sequence is MSAEVIHQVE…LQAAIQKSFK (195 aa). Positions 1–227 are interaction with FADD; it reads MSAEVIHQVE…GTQQEPVKKS (227 aa). An interaction with CASP8 propeptide region spans residues 1–305; the sequence is MSAEVIHQVE…FACMPEHRDY (305 aa). The not proteolytically processed and involved in apoptosis inhibition stretch occupies residues 1-435; that stretch reads MSAEVIHQVE…CLSQKLRQER (435 aa). The segment at 192-435 is interaction with CASP3; sequence KSFKDPSNNF…CLSQKLRQER (244 aa). The segment at 192–480 is interaction with TRAF1 and TRAF2; sequence KSFKDPSNNF…LRKKLIPSYT (289 aa). The interaction with CASP8 subunits p18 and p10 stretch occupies residues 217 to 480; the sequence is LGTQQEPVKK…LRKKLIPSYT (264 aa). The tract at residues 263–358 is caspase; it reads ETELLRDTFT…AGKPKIFFIQ (96 aa). An interaction with CASP8 region spans residues 370 to 480; sequence SSLLEVDGPA…LRKKLIPSYT (111 aa).

The protein belongs to the peptidase C14A family. TNFRSF6 stimulation triggers recruitment to the death-inducing signaling complex (DISC) formed by TNFRSF6, FADD and CASP8. A proteolytic fragment (p43) stays associated with the DISC. Interacts with RIPK1. In terms of processing, proteolytically processed by CASP8 generating subunit p43 and p12.

In terms of biological role, apoptosis regulator protein which may function as a crucial link between cell survival and cell death pathways in mammalian cells. Acts as an inhibitor of TNFRSF6 mediated apoptosis. A proteolytic fragment (p43) is likely retained in the death-inducing signaling complex (DISC) thereby blocking further recruitment and processing of caspase-8 at the complex. Full length and shorter isoforms have been shown either to induce apoptosis or to reduce TNFRSF-triggered apoptosis. Lacks enzymatic (caspase) activity. The protein is CASP8 and FADD-like apoptosis regulator (CFLAR) of Pongo abelii (Sumatran orangutan).